The following is a 317-amino-acid chain: METWQEVTVHVHRDAQEAVSNLLIETGSQGVAIADSADYIGQKDRFGELYPDVEQSDMIAITAYYPSSTNLADVIATINEQLAELASFGLQVGQVTVDSQELAEEDWADNWKKYYEPARITHDLTIVPSWTDYDASAGEKVIKLDPGMAFGTGTHPTTKMSLFALEQILRGGETVIDVGTGSGVLSIASSLLGAKTIYAYDLDDVAVRVAQENIDLNQGTDNIHVAAGDLLKEVSQEADVIVANILADILVLLTDDAYRLVKKEGYLILSGIISEKLDMVLEAAFSAGFFLETHMVQGEWNALVFKKTDDISGVIGG.

S-adenosyl-L-methionine contacts are provided by T158, G179, D201, and N244.

This sequence belongs to the methyltransferase superfamily. PrmA family.

The protein localises to the cytoplasm. It carries out the reaction L-lysyl-[protein] + 3 S-adenosyl-L-methionine = N(6),N(6),N(6)-trimethyl-L-lysyl-[protein] + 3 S-adenosyl-L-homocysteine + 3 H(+). Methylates ribosomal protein L11. The sequence is that of Ribosomal protein L11 methyltransferase from Streptococcus pyogenes serotype M3 (strain ATCC BAA-595 / MGAS315).